The sequence spans 285 residues: 4-diphosphocytidyl-2-C-methyl-D-erythritol kinase (285 aa).

Residue Lys10 is part of the active site. Pro93–Ser103 is a binding site for ATP. The active site involves Asp135.

Belongs to the GHMP kinase family. IspE subfamily.

It catalyses the reaction 4-CDP-2-C-methyl-D-erythritol + ATP = 4-CDP-2-C-methyl-D-erythritol 2-phosphate + ADP + H(+). It functions in the pathway isoprenoid biosynthesis; isopentenyl diphosphate biosynthesis via DXP pathway; isopentenyl diphosphate from 1-deoxy-D-xylulose 5-phosphate: step 3/6. Its function is as follows. Catalyzes the phosphorylation of the position 2 hydroxy group of 4-diphosphocytidyl-2C-methyl-D-erythritol. The chain is 4-diphosphocytidyl-2-C-methyl-D-erythritol kinase from Vesicomyosocius okutanii subsp. Calyptogena okutanii (strain HA).